The sequence spans 257 residues: Early E1A protein (257 aa).

Disordered regions lie at residues Asn-26–His-46 and Leu-75–Ile-103. The interval Pro-43–Leu-51 is interaction with RB1 in competition with E2F1. Over residues Leu-75 to Leu-91 the composition is skewed to low complexity. The interval Glu-79–Glu-144 is interaction with UBE2I. Positions Pro-94–Ile-103 are enriched in basic and acidic residues. The PXLXP motif, interaction with host ZMYND11 motif lies at Pro-104–Trp-108. An LXCXE motif, interaction with host RB1 and TMEM173/STING motif is present at residues Leu-113–Glu-117. The segment at Cys-158–Cys-178 is a zinc-finger region. Residues Val-191–Pro-221 form a disordered region. Positions Thr-200–Glu-209 are enriched in low complexity. The short motif at Pro-246–Cys-250 is the PXDLS motif, CTBP-binding element. The Nuclear localization signal signature appears at Arg-252 to His-257.

Belongs to the adenoviridae E1A protein family. As to quaternary structure, interacts with host UBE2I; this interaction interferes with polySUMOylation. Interacts with host RB1; this interaction induces the aberrant dissociation of RB1-E2F1 complex thereby disrupting the activity of RB1 and activating E2F1-regulated genes. Interacts with host ATF7; the interaction enhances ATF7-mediated viral transactivation activity which requires the zinc binding domains of both proteins. Isoform early E1A 32 kDa protein and isoform early E1A 26 kDa protein interact (via N-terminus) with CUL1 and E3 ubiquitin ligase RBX1; these interactions inhibit RBX1-CUL1-dependent elongation reaction of ubiquitin chains and attenuate ubiquitination of SCF(FBXW7) target proteins. Interacts (via PXLXP motif) with host ZMYND11/BS69 (via MYND-type zinc finger); this interaction inhibits E1A mediated transactivation. Interacts with host EP300; this interaction stimulates the acetylation of RB1 by recruiting EP300 and RB1 into a multimeric-protein complex. Interacts with host CTBP1 and CTBP2; this interaction seems to potentiate viral replication. Interacts with host DCAF7. Interacts with host DYRK1A. Interacts with host KPNA4; this interaction allows E1A import into the host nucleus. Interacts with host EP400; this interaction stabilizes MYC. Interacts with host TBP protein; this interaction probably disrupts the TBP-TATA complex. Interacts (via LXCXE motif) with host TMEM173/STING; this interaction impairs the ability of TMEM173/STING to sense cytosolic DNA and promote the production of type I interferon (IFN-alpha and IFN-beta). Interacts (via C-terminus) with host ZBED1/hDREF (via C-terminus); the interaction is direct.

Its subcellular location is the host nucleus. Its function is as follows. Plays a role in viral genome replication by driving entry of quiescent cells into the cell cycle. Stimulation of progression from G1 to S phase allows the virus to efficiently use the cellular DNA replicating machinery to achieve viral genome replication. E1A protein has both transforming and trans-activating activities. Induces the disassembly of the E2F1 transcription factor from RB1 by direct competition for the same binding site on RB1, with subsequent transcriptional activation of E2F1-regulated S-phase genes and of the E2 region of the adenoviral genome. Release of E2F1 leads to the ARF-mediated inhibition of MDM2 and causes TP53/p53 to accumulate because it is not targeted for degradation by MDM2-mediated ubiquitination anymore. This increase in TP53, in turn, would arrest the cell proliferation and direct its death but this effect is counteracted by the viral protein E1B-55K. Inactivation of the ability of RB1 to arrest the cell cycle is critical for cellular transformation, uncontrolled cellular growth and proliferation induced by viral infection. Interaction with RBX1 and CUL1 inhibits ubiquitination of the proteins targeted by SCF(FBXW7) ubiquitin ligase complex, and may be linked to unregulated host cell proliferation. The tumorigenesis-restraining activity of E1A may be related to the disruption of the host CtBP-CtIP complex through the CtBP binding motif. Interaction with host TMEM173/STING impairs the ability of TMEM173/STING to sense cytosolic DNA and promote the production of type I interferon (IFN-alpha and IFN-beta). Promotes the sumoylation of host ZBED1/hDREF with SUMO1. The sequence is that of Early E1A protein from Human adenovirus E serotype 4 (HAdV-4).